The following is a 95-amino-acid chain: Co-chaperonin GroES (95 aa).

Belongs to the GroES chaperonin family. Heptamer of 7 subunits arranged in a ring. Interacts with the chaperonin GroEL.

Its subcellular location is the cytoplasm. Together with the chaperonin GroEL, plays an essential role in assisting protein folding. The GroEL-GroES system forms a nano-cage that allows encapsulation of the non-native substrate proteins and provides a physical environment optimized to promote and accelerate protein folding. GroES binds to the apical surface of the GroEL ring, thereby capping the opening of the GroEL channel. The protein is Co-chaperonin GroES of Francisella tularensis subsp. tularensis (strain FSC 198).